A 725-amino-acid chain; its full sequence is Eukaryotic elongation factor 2 kinase (725 aa).

Positions 1 to 12 (MADEDLIFRLEG) are enriched in basic and acidic residues. Residues 1 to 38 (MADEDLIFRLEGVDGGQSPRAGHDGDSDGDSDDEEGYF) are disordered. Alanine 2 bears the N-acetylalanine mark. 2 positions are modified to phosphoserine: serine 18 and serine 27. Residues 27–36 (SDGDSDDEEG) are compositionally biased toward acidic residues. Phosphoserine; by autocatalysis is present on residues serine 61 and serine 66. A phosphoserine mark is found at serine 70, serine 71, serine 72, and serine 74. Serine 78 is subject to Phosphoserine; by autocatalysis and TRPM7. Residues 81 to 94 (FKEAWKHAIQKAKH) form a calmodulin-binding region. Residues 116–326 (RYNAVTGEWL…ICESMGLAPF (211 aa)) form the Alpha-type protein kinase domain. Position 243 is a phosphoserine (serine 243). Residue 296–302 (GDGNLGV) participates in ATP binding. 2 positions are modified to phosphothreonine; by autocatalysis: threonine 348 and threonine 353. Disordered regions lie at residues 352 to 405 (GTEE…PHSQ) and 423 to 477 (SRDH…SLGS). At serine 359 the chain carries Phosphoserine; by MAPK13 and CDK1. A compositionally biased stretch (low complexity) spans 363-377 (RTLSGSRPPLLRPLS). Serine 366 carries the phosphoserine; by autocatalysis, RPS6KA1 and RPS6KB1 modification. The segment covering 386-404 (SDVTFDSLPSSPSSATPHS) has biased composition (polar residues). Phosphoserine is present on serine 392. Serine 398 is modified (phosphoserine; by AMPK). Basic and acidic residues-rich tracts occupy residues 423-436 (SRDH…RESE) and 445-469 (SEKR…RKYE). Position 435 is a phosphoserine (serine 435). Serine 445 carries the post-translational modification Phosphoserine; by autocatalysis. Position 470 is a phosphoserine (serine 470). At serine 474 the chain carries Phosphoserine; by autocatalysis. At serine 477 the chain carries Phosphoserine. Phosphoserine; by autocatalysis is present on serine 491. A Phosphoserine; by PKA modification is found at serine 500.

It belongs to the protein kinase superfamily. Alpha-type protein kinase family. In terms of assembly, monomer or homodimer. Interacts with Calmodulin/CALM1; this interaction is strictly required for phosphorylation activity. In terms of processing, autophosphorylated at multiple residues, Thr-348 being the major site. Phosphorylated by AMP-activated protein kinase AMPK at Ser-398 leading to EEF2K activation and protein synthesis inhibition. Phosphorylated by TRPM7 at Ser-78 resulting in improved protein stability, higher EE2F phosphorylated and subsequently reduced rate of protein synthesis. Phosphorylation by other kinases such as CDK1 and MAPK13 at Ser-359 or RPS6KA1 and RPS6KB1 at Ser-366 instead decrease EEF2K activity and promote protein synthesis.

It carries out the reaction [translation elongation factor 2] + ATP = [translation elongation factor 2]-phosphate + ADP + H(+). With respect to regulation, undergoes calcium/calmodulin-dependent intramolecular autophosphorylation, and this results in it becoming partially calcium/calmodulin-independent. In terms of biological role, threonine kinase that regulates protein synthesis by controlling the rate of peptide chain elongation. Upon activation by a variety of upstream kinases including AMPK or TRPM7, phosphorylates the elongation factor EEF2 at a single site, renders it unable to bind ribosomes and thus inactive. In turn, the rate of protein synthesis is reduced. The polypeptide is Eukaryotic elongation factor 2 kinase (EEF2K) (Homo sapiens (Human)).